The chain runs to 1209 residues: Putative lysine-specific demethylase JMJ16 (1209 aa).

Residues 146–187 (APVFYPSEEEFEDTLNYIAKIRPEAEKYGICRIVPPPSWKPP) form the JmjN domain. A Nuclear localization signal motif is present at residues 217–224 (MKKISKLP). In terms of domain architecture, JmjC spans 361–527 (KYAKSGWNLN…HGQIAIELYC (167 aa)). His-407, Glu-409, and His-495 together coordinate Fe cation. Residues Cys-617, Cys-620, Cys-631, Cys-633, Cys-640, His-643, Cys-648, and Cys-650 each contribute to the Zn(2+) site. The C5HC2 zinc finger occupies 617-667 (CCICFFDLHLSAAGCRCSPEKYSCLTHVKELCSCPWVTKYFLFRYDIDELN). A disordered region spans residues 872 to 900 (DTRNTISLPTNDQKTMRRDVPSSTSHAEV). A compositionally biased stretch (polar residues) spans 875–884 (NTISLPTNDQ). Positions 974–1032 (VVRRINCNVEPLSYGCVLSGKSWCSRRAIFPKGFRSRVKYINILDPTNMCFYISEILDA) constitute an FYR N-terminal domain. Positions 1034-1124 (RNSPLFMVYL…RVCTDYWDSR (91 aa)) constitute an FYR C-terminal domain.

It belongs to the JARID1 histone demethylase family. As to quaternary structure, interacts with MMD1 in the nucleus of male meiocytes, especially on pachytene chromosomes. Fe(2+) is required as a cofactor. In terms of tissue distribution, confined to inflorescences.

The protein resides in the nucleus. The enzyme catalyses N(6),N(6),N(6)-trimethyl-L-lysyl(4)-[histone H3] + 2-oxoglutarate + O2 = N(6),N(6)-dimethyl-L-lysyl(4)-[histone H3] + formaldehyde + succinate + CO2. The catalysed reaction is N(6),N(6)-dimethyl-L-lysyl(4)-[histone H3] + 2-oxoglutarate + O2 = N(6)-methyl-L-lysyl(4)-[histone H3] + formaldehyde + succinate + CO2. It carries out the reaction N(6)-methyl-L-lysyl(4)-[histone H3] + 2-oxoglutarate + O2 = L-lysyl(4)-[histone H3] + formaldehyde + succinate + CO2. Functions as a histone H3 'Lys-4' (H3K4me) demethylase involved in the negative regulation of gene expression. Active on H3K4me1, H3K4me2 and H3K4me3. Not active on mono-, di- and trimethylated H3K9, H3K27 and H3K36 in somatic cells. However, also active on H3K9 when in complex with MMD1, a meiocyte-specific histone reader. Together with MMD1, promotes gene expression in male meiocytes in an H3K9me3-dependent manner, and contributes to meiotic chromosome condensation by triggering some condensin promoters (e.g. CAP-D3 and CAP-H). Together with JMJ14 and JMJ17, required for plant growth and development. Represses leaf senescence in an age-dependent manner by demethylating H3K4me3 activating histone marks at senescence-associated genes (SAGs) loci, including WRKY53 and SAG201, thus preventing their premature expression. This Arabidopsis thaliana (Mouse-ear cress) protein is Putative lysine-specific demethylase JMJ16.